The primary structure comprises 433 residues: Serendipity locus protein delta (433 aa).

The region spanning 1–90 (MDTCFFCGAV…TQKRLTTQLK (90 aa)) is the ZAD domain. Cys-4, Cys-7, Cys-61, and Cys-64 together coordinate Zn(2+). The disordered stretch occupies residues 141 to 162 (DTEIKREFVDEEEEEDDDDDDE). Over residues 149–162 (VDEEEEEDDDDDDE) the composition is skewed to acidic residues. Residues 187-193 (PTKKRVK) carry the Nuclear localization signal motif. 7 consecutive C2H2-type zinc fingers follow at residues 194–217 (QECT…SEEH), 223–245 (HICP…MNLH), 251–273 (KQCR…MRMH), 279–301 (YQCE…RLRH), 308–330 (IICS…TLIH), 337–359 (HYCS…MKTH), and 405–428 (GFCL…QFDH).

As to quaternary structure, homodimer (via ZAD domain) in solution. Binds DNA as a homodimer. N-terminal regions of the protein are required, in addition to the zinc fingers, for the specificity of chromatin-binding. Predominantly localized to the sub- and supraesophagal ganglia and the ventral nerve cord in the embryo, after dorsal closure.

It localises to the nucleus. Transcriptional activator that controls bicoid gene expression during oogenesis. Found in transcriptionally active cells. Binds to specific sites on polytene chromosomes of third instar larvae. Binds to the consensus DNA sequence 5'-YTAGAGATGGRAA-3'. The protein is Serendipity locus protein delta (Sry-delta) of Drosophila melanogaster (Fruit fly).